The chain runs to 199 residues: Recombination protein RecR (199 aa).

Residues C58–C73 form a C4-type zinc finger. Residues L81–P176 enclose the Toprim domain.

The protein belongs to the RecR family.

Its function is as follows. May play a role in DNA repair. It seems to be involved in an RecBC-independent recombinational process of DNA repair. It may act with RecF and RecO. This Alkaliphilus oremlandii (strain OhILAs) (Clostridium oremlandii (strain OhILAs)) protein is Recombination protein RecR.